The following is a 470-amino-acid chain: ATP-dependent protease ATPase subunit HslU (470 aa).

ATP is bound by residues Val-22 and 64 to 69 (GVGKTE). Positions 145 to 187 (KKANNNTNSNNPLESLFGGSIPNFGQNNDDEEETPTDEVKTKR) are disordered. ATP contacts are provided by Asp-283, Glu-348, and Arg-420.

This sequence belongs to the ClpX chaperone family. HslU subfamily. As to quaternary structure, a double ring-shaped homohexamer of HslV is capped on each side by a ring-shaped HslU homohexamer. The assembly of the HslU/HslV complex is dependent on binding of ATP.

The protein localises to the cytoplasm. Functionally, ATPase subunit of a proteasome-like degradation complex; this subunit has chaperone activity. The binding of ATP and its subsequent hydrolysis by HslU are essential for unfolding of protein substrates subsequently hydrolyzed by HslV. HslU recognizes the N-terminal part of its protein substrates and unfolds these before they are guided to HslV for hydrolysis. In Staphylococcus saprophyticus subsp. saprophyticus (strain ATCC 15305 / DSM 20229 / NCIMB 8711 / NCTC 7292 / S-41), this protein is ATP-dependent protease ATPase subunit HslU.